A 475-amino-acid polypeptide reads, in one-letter code: D-lactate dehydrogenase (475 aa).

In terms of domain architecture, FAD-binding PCMH-type spans 43 to 222; it reads YGKARPEVLV…TELTLKVIPA (180 aa).

It belongs to the FAD-binding oxidoreductase/transferase type 4 family. FAD serves as cofactor. Zn(2+) is required as a cofactor.

It carries out the reaction (R)-lactate + A = pyruvate + AH2. Its function is as follows. Catalyzes the dehydrogenation of (R)-lactate (D-lactate) to pyruvate. Active in vitro with the artificial electron acceptor 2,6-dichlorophenolindophenol (DCPIP), but not with NAD, NADP, or cytochrome c. Also displays a very low oxidase activity in vitro on D-lactate and L-lactate with O2 as the electron acceptor, but this activity is most likely not physiological. This Anaerostipes hadrus protein is D-lactate dehydrogenase.